The sequence spans 737 residues: Palmitoyltransferase akr1 (737 aa).

The disordered stretch occupies residues 1 to 60 (MSSGDPPSGLQASGSNSSAALGLSPPSAPSGKSAATPPKVATDDASVELSSMKSERSPAK). Over 1–314 (MSSGDPPSGL…YVRDKAIMSK (314 aa)) the chain is Cytoplasmic. Over residues 7 to 38 (PSGLQASGSNSSAALGLSPPSAPSGKSAATPP) the composition is skewed to low complexity. ANK repeat units lie at residues 97-126 (EGITPLHWAAINNQYAMCKFLIDSGADVNA), 131-160 (SVATPAMWAAQRCHYYIVHLLLQYGADPLL), 164-193 (QGYNILHLATIDGNAFLLVLLLHQEIPVDV), 197-226 (QGHTGLMWAAYKGYPACVDLFLRWGANPNA), and 230-259 (GGLAPLHWALVKGSLPCVLKILEYGADRFA). Transmembrane regions (helical) follow at residues 315–335 (FFFFWPFLLLFVVLWILSNMV) and 336–356 (VYFAIPVAAVAVFGLQWVAKK). Over 357–372 (AASQGPSEFRIIQKTP) the chain is Cytoplasmic. The chain crosses the membrane as a helical span at residues 373–393 (FLAGVFAGSLFWVFVRYVLYV). Residues 394 to 402 (LPATYSTNP) lie on the Lumenal side of the membrane. A helical membrane pass occupies residues 403-423 (FLNLGFVVFFSLTTYFYFYSM). At 424-500 (VADPGYVPKL…NCVGVNNLRQ (77 aa)) the chain is on the cytoplasmic side. Residues 456-506 (NFCVYCMIRRPLRSKHCRRCSRCVAKHDHHCPWIDNCVGVNNLRQFVLYIL) enclose the DHHC domain. C486 functions as the S-palmitoyl cysteine intermediate in the catalytic mechanism. A helical membrane pass occupies residues 501–521 (FVLYILCLEIGIILFLHLTFN). Over 522–549 (YINGLPAPAEPICNILNDQICSFVLRDT) the chain is Lumenal. A helical transmembrane segment spans residues 550–570 (FTLLLDVWIAIQLVWVTMLGV). At 571-737 (VQLVQVSRNQ…VAYDEAADIV (167 aa)) the chain is on the cytoplasmic side.

This sequence belongs to the DHHC palmitoyltransferase family. AKR/ZDHHC17 subfamily.

It localises to the early endosome membrane. Its subcellular location is the golgi apparatus membrane. It carries out the reaction L-cysteinyl-[protein] + hexadecanoyl-CoA = S-hexadecanoyl-L-cysteinyl-[protein] + CoA. In terms of biological role, palmitoyltransferase specific for casein kinase 1. The chain is Palmitoyltransferase akr1 (akr1) from Emericella nidulans (strain FGSC A4 / ATCC 38163 / CBS 112.46 / NRRL 194 / M139) (Aspergillus nidulans).